The primary structure comprises 539 residues: uncharacterized protein (539 aa).

A run of 5 helical transmembrane segments spans residues 4–22, 27–46, 56–78, 90–112, and 155–177; these read LVENQLLALVVIMTVGLLL, IFGFRLGVAAVLFVGLALST, LIYVVGLSLFVYTIGLEAGPGFF, ALTLGAIIATTALAWALITVLNI, and PVVAYSLAYPLGVLIVILSIAIF. RCK C-terminal domains lie at 187–269 and 271–352; these read KEAE…AIGE and IDGD…LLGD. The next 4 helical transmembrane spans lie at 360-382, 422-444, 453-475, and 516-538; these read FNLLPLAAGLMIGVLVGMVEFPL, LALRQLGITLFLAAIGTSAGAGF, SLTIIGFGALLTLFISITVLFVG, and YTSVYPLAMIAKILAAQTLLFLL.

Belongs to the AAE transporter (TC 2.A.81) family.

It localises to the cell membrane. This is an uncharacterized protein from Corynebacterium glutamicum (strain ATCC 13032 / DSM 20300 / JCM 1318 / BCRC 11384 / CCUG 27702 / LMG 3730 / NBRC 12168 / NCIMB 10025 / NRRL B-2784 / 534).